Reading from the N-terminus, the 158-residue chain is NAD(P)H-quinone oxidoreductase subunit J, chloroplastic (158 aa).

This sequence belongs to the complex I 30 kDa subunit family. As to quaternary structure, NDH is composed of at least 16 different subunits, 5 of which are encoded in the nucleus.

It is found in the plastid. It localises to the chloroplast thylakoid membrane. The enzyme catalyses a plastoquinone + NADH + (n+1) H(+)(in) = a plastoquinol + NAD(+) + n H(+)(out). The catalysed reaction is a plastoquinone + NADPH + (n+1) H(+)(in) = a plastoquinol + NADP(+) + n H(+)(out). NDH shuttles electrons from NAD(P)H:plastoquinone, via FMN and iron-sulfur (Fe-S) centers, to quinones in the photosynthetic chain and possibly in a chloroplast respiratory chain. The immediate electron acceptor for the enzyme in this species is believed to be plastoquinone. Couples the redox reaction to proton translocation, and thus conserves the redox energy in a proton gradient. The polypeptide is NAD(P)H-quinone oxidoreductase subunit J, chloroplastic (Jasminum nudiflorum (Winter jasmine)).